The primary structure comprises 34 residues: Potassium channel toxin alpha-KTx 6 hetlaxin (34 aa).

Cystine bridges form between cysteine 3/cysteine 24, cysteine 9/cysteine 29, cysteine 13/cysteine 31, and cysteine 19/cysteine 34. The residue at position 34 (cysteine 34) is a Cysteine amide.

In terms of processing, contains 4 disulfide bonds. As to expression, expressed by the venom gland.

It localises to the secreted. Binds to voltage-gated potassium channels Kv1.3/KCNA3 (IC(50)=0.48 uM) and Kv1.1/KCNA1 (IC(50)=6.7 uM) and inhibits channel activity. The sequence is that of Potassium channel toxin alpha-KTx 6 hetlaxin from Heterometrus laoticus (Thai giant scorpion).